The chain runs to 292 residues: Elongation factor Ts (292 aa).

The interval 80-83 is involved in Mg(2+) ion dislocation from EF-Tu; the sequence is TDFV.

Belongs to the EF-Ts family.

Its subcellular location is the cytoplasm. Associates with the EF-Tu.GDP complex and induces the exchange of GDP to GTP. It remains bound to the aminoacyl-tRNA.EF-Tu.GTP complex up to the GTP hydrolysis stage on the ribosome. This Ralstonia pickettii (strain 12J) protein is Elongation factor Ts.